A 101-amino-acid polypeptide reads, in one-letter code: Small ribosomal subunit protein eS24 (101 aa).

The protein belongs to the eukaryotic ribosomal protein eS24 family.

This chain is Small ribosomal subunit protein eS24, found in Methanosarcina acetivorans (strain ATCC 35395 / DSM 2834 / JCM 12185 / C2A).